Here is a 431-residue protein sequence, read N- to C-terminus: Serine--tRNA ligase (431 aa).

Residue 235–237 participates in L-serine binding; that stretch reads TSE. Residue 266–268 participates in ATP binding; sequence RSE. Residue E289 coordinates L-serine. ATP is bound at residue 353 to 356; it reads EISS. S388 is a binding site for L-serine.

This sequence belongs to the class-II aminoacyl-tRNA synthetase family. Type-1 seryl-tRNA synthetase subfamily. Homodimer. The tRNA molecule binds across the dimer.

The protein localises to the cytoplasm. It carries out the reaction tRNA(Ser) + L-serine + ATP = L-seryl-tRNA(Ser) + AMP + diphosphate + H(+). The catalysed reaction is tRNA(Sec) + L-serine + ATP = L-seryl-tRNA(Sec) + AMP + diphosphate + H(+). The protein operates within aminoacyl-tRNA biosynthesis; selenocysteinyl-tRNA(Sec) biosynthesis; L-seryl-tRNA(Sec) from L-serine and tRNA(Sec): step 1/1. Catalyzes the attachment of serine to tRNA(Ser). Is also able to aminoacylate tRNA(Sec) with serine, to form the misacylated tRNA L-seryl-tRNA(Sec), which will be further converted into selenocysteinyl-tRNA(Sec). The sequence is that of Serine--tRNA ligase from Paraburkholderia phytofirmans (strain DSM 17436 / LMG 22146 / PsJN) (Burkholderia phytofirmans).